The primary structure comprises 100 residues: Protein RnfH (100 aa).

Belongs to the UPF0125 (RnfH) family.

The sequence is that of Protein RnfH from Pseudomonas paraeruginosa (strain DSM 24068 / PA7) (Pseudomonas aeruginosa (strain PA7)).